The primary structure comprises 339 residues: Protein-glutamate methylesterase/protein-glutamine glutaminase 3 (339 aa).

The region spanning 2 to 119 (NIGIVNDLPL…GLSTDASPQA (118 aa)) is the Response regulatory domain. Aspartate 53 carries the post-translational modification 4-aspartylphosphate. One can recognise a CheB-type methylesterase domain in the interval 141 to 336 (PGPAPTRGQP…PQLIARIALT (196 aa)). Residues serine 158, histidine 185, and aspartate 278 contribute to the active site.

It belongs to the CheB family. In terms of processing, phosphorylated by CheA. Phosphorylation of the N-terminal regulatory domain activates the methylesterase activity.

Its subcellular location is the cytoplasm. The enzyme catalyses [protein]-L-glutamate 5-O-methyl ester + H2O = L-glutamyl-[protein] + methanol + H(+). It carries out the reaction L-glutaminyl-[protein] + H2O = L-glutamyl-[protein] + NH4(+). Functionally, involved in chemotaxis. Part of a chemotaxis signal transduction system that modulates chemotaxis in response to various stimuli. Catalyzes the demethylation of specific methylglutamate residues introduced into the chemoreceptors (methyl-accepting chemotaxis proteins or MCP) by CheR. Also mediates the irreversible deamidation of specific glutamine residues to glutamic acid. The sequence is that of Protein-glutamate methylesterase/protein-glutamine glutaminase 3 from Burkholderia orbicola (strain AU 1054).